Consider the following 443-residue polypeptide: Tubulin beta-1 chain (443 aa).

Glutamine 11, glutamate 69, serine 138, glycine 142, threonine 143, glycine 144, asparagine 204, and asparagine 226 together coordinate GTP. Residue glutamate 69 coordinates Mg(2+). The tract at residues glutamine 424–alanine 443 is disordered. Over residues glycine 434–alanine 443 the composition is skewed to acidic residues.

Belongs to the tubulin family. As to quaternary structure, dimer of alpha and beta chains. A typical microtubule is a hollow water-filled tube with an outer diameter of 25 nm and an inner diameter of 15 nM. Alpha-beta heterodimers associate head-to-tail to form protofilaments running lengthwise along the microtubule wall with the beta-tubulin subunit facing the microtubule plus end conferring a structural polarity. Microtubules usually have 13 protofilaments but different protofilament numbers can be found in some organisms and specialized cells. It depends on Mg(2+) as a cofactor.

The protein localises to the cytoplasm. The protein resides in the cytoskeleton. Functionally, tubulin is the major constituent of microtubules, a cylinder consisting of laterally associated linear protofilaments composed of alpha- and beta-tubulin heterodimers. Microtubules grow by the addition of GTP-tubulin dimers to the microtubule end, where a stabilizing cap forms. Below the cap, tubulin dimers are in GDP-bound state, owing to GTPase activity of alpha-tubulin. In Anemia phyllitidis (Fern), this protein is Tubulin beta-1 chain (TUBB1).